Here is a 559-residue protein sequence, read N- to C-terminus: Tissue-type plasminogen activator (559 aa).

The N-terminal stretch at 1-17 (MKGELLCVLLLCGVAFT) is a signal peptide. A propeptide spanning residues 18 to 29 (LPDQGIHRRFRR) is cleaved from the precursor. The propeptide at 30–32 (GAR) is removed by plasmin. In terms of domain architecture, Fibronectin type-I spans 36–78 (ATCRDEQTQTTYQQHQSWLRPMLRGNRVEYCRCNSGLAQCHSV). Cystine bridges form between cysteine 38/cysteine 68, cysteine 66/cysteine 75, cysteine 83/cysteine 94, cysteine 88/cysteine 105, cysteine 107/cysteine 116, cysteine 124/cysteine 205, cysteine 145/cysteine 187, cysteine 176/cysteine 200, cysteine 213/cysteine 294, cysteine 234/cysteine 276, cysteine 265/cysteine 289, cysteine 297/cysteine 428, cysteine 340/cysteine 356, cysteine 348/cysteine 417, cysteine 442/cysteine 516, cysteine 474/cysteine 490, and cysteine 506/cysteine 534. The tract at residues 39 to 49 (RDEQTQTTYQQ) is important for binding to annexin A2. The EGF-like domain maps to 79–117 (PVRSCSEPRCFNGGTCQQALYFSDFVCQCPDGFVGKRCD). 2 consecutive Kringle domains span residues 124-205 (CFEG…TPAC) and 213-294 (CYVG…MSPC). A glycan (N-linked (GlcNAc...) asparagine) is linked at asparagine 149. A Peptidase S1 domain is found at 309–558 (IKGGLFTDIT…YLNWIQDNMK (250 aa)). Catalysis depends on charge relay system residues histidine 355 and aspartate 404. An N-linked (GlcNAc...) asparagine glycan is attached at asparagine 481. The active-site Charge relay system is the serine 510.

This sequence belongs to the peptidase S1 family. Heterodimer of chain A and chain B held by a disulfide bond. Binds to fibrin with high affinity. This interaction leads to an increase in the catalytic efficiency of the enzyme due to an increase in affinity for plasminogen. Similarly, binding to heparin increases the activation of plasminogen. Binds to annexin A2, cytokeratin-8, fibronectin and laminin. Binds to mannose receptor and the low-density lipoprotein receptor-related protein (LRP1); these proteins are involved in TPA clearance. Binds LRP1B; binding is followed by internalization and degradation. Forms heterodimer with SERPINA5. Interacts with SERPINE1. In complex with SERPINE1, interacts with SORL1. In terms of processing, the single chain, almost fully active enzyme, can be further processed into a two-chain fully active form by a cleavage after Arg-308 catalyzed by plasmin, tissue kallikrein or factor Xa.

The protein resides in the secreted. The protein localises to the extracellular space. The enzyme catalyses Specific cleavage of Arg-|-Val bond in plasminogen to form plasmin.. Inhibited by SERPINA5. Inhibited by SERPINE1. Functionally, converts the abundant, but inactive, zymogen plasminogen to plasmin by hydrolyzing a single Arg-Val bond in plasminogen. By controlling plasmin-mediated proteolysis, it plays an important role in tissue remodeling and degradation, in cell migration and many other physiopathological events. During oocyte activation, plays a role in cortical granule reaction in the zona reaction, which contributes to the block to polyspermy. The chain is Tissue-type plasminogen activator (Plat) from Rattus norvegicus (Rat).